Reading from the N-terminus, the 319-residue chain is ATP-dependent 6-phosphofructokinase (319 aa).

Gly-11 serves as a coordination point for ATP. 21 to 25 (RSIAR) provides a ligand contact to ADP. Residues 72–73 (RC) and 102–105 (GDGS) contribute to the ATP site. Residue Asp-103 coordinates Mg(2+). 125 to 127 (TID) serves as a coordination point for substrate. The active-site Proton acceptor is the Asp-127. Residue Arg-154 participates in ADP binding. Substrate-binding positions include Arg-162 and 169-171 (MGR). Residues 185 to 187 (GAE), Arg-211, and 213 to 215 (KLH) each bind ADP. Residues Glu-222, Lys-243, and 249–252 (HVQR) contribute to the substrate site.

This sequence belongs to the phosphofructokinase type A (PFKA) family. ATP-dependent PFK group I subfamily. Prokaryotic clade 'B1' sub-subfamily. Homotetramer. Requires Mg(2+) as cofactor.

Its subcellular location is the cytoplasm. The catalysed reaction is beta-D-fructose 6-phosphate + ATP = beta-D-fructose 1,6-bisphosphate + ADP + H(+). The protein operates within carbohydrate degradation; glycolysis; D-glyceraldehyde 3-phosphate and glycerone phosphate from D-glucose: step 3/4. With respect to regulation, allosterically activated by ADP and other diphosphonucleosides, and allosterically inhibited by phosphoenolpyruvate. Functionally, catalyzes the phosphorylation of D-fructose 6-phosphate to fructose 1,6-bisphosphate by ATP, the first committing step of glycolysis. The chain is ATP-dependent 6-phosphofructokinase from Finegoldia magna (strain ATCC 29328 / DSM 20472 / WAL 2508) (Peptostreptococcus magnus).